We begin with the raw amino-acid sequence, 130 residues long: Chemotaxis protein CheY-3 (130 aa).

A Response regulatory domain is found at 10-127; that stretch reads KILIVDDFST…TLKEKLDKIF (118 aa). The Mg(2+) site is built by D15, D16, D60, and N62. D60 carries the 4-aspartylphosphate modification.

As to quaternary structure, interacts with FliM. Mg(2+) is required as a cofactor.

The protein resides in the cytoplasm. In terms of biological role, acts as a response regulator to control chemotaxis. Involved in the transmission of sensory signals from the chemoreceptors to the flagellar motors. Switches the flagellar rotation by binding to the flagellar motor switch protein FliM. In its active (phosphorylated or acetylated) form, exhibits enhanced binding to a switch component, FliM, at the flagellar motor which induces a change from counterclockwise to clockwise flagellar rotation. The polypeptide is Chemotaxis protein CheY-3 (Vibrio cholerae serotype O1 (strain ATCC 39315 / El Tor Inaba N16961)).